The primary structure comprises 476 residues: Tubulointerstitial nephritis antigen (476 aa).

N-linked (GlcNAc...) asparagine glycosylation is present at N38. One can recognise an SMB domain in the interval 59-107 (RFGCCADRDDGCVTQFYEADALCYCDKFCERENSDCCPDYKSFCREEKG). Cystine bridges form between C63/C83 and C87/C94. 4 N-linked (GlcNAc...) asparagine glycosylation sites follow: N175, N314, N360, and N455.

The protein belongs to the peptidase C1 family.

The protein localises to the secreted. Its subcellular location is the extracellular space. The protein resides in the extracellular matrix. It is found in the basement membrane. Functionally, mediates adhesion of proximal tubule epithelial cells via integrins alpha3-beta1 and alphaV-beta3. This is a non catalytic peptidase C1 family protein. This is Tubulointerstitial nephritis antigen (TINAG) from Bos taurus (Bovine).